We begin with the raw amino-acid sequence, 559 residues long: Formate--tetrahydrofolate ligase (559 aa).

Residue 68–75 (TPAGEGKS) coordinates ATP.

The protein belongs to the formate--tetrahydrofolate ligase family.

The catalysed reaction is (6S)-5,6,7,8-tetrahydrofolate + formate + ATP = (6R)-10-formyltetrahydrofolate + ADP + phosphate. It participates in one-carbon metabolism; tetrahydrofolate interconversion. This is Formate--tetrahydrofolate ligase from Clostridium tetani (strain Massachusetts / E88).